Reading from the N-terminus, the 715-residue chain is Serrate RNA effector molecule homolog (715 aa).

3 disordered regions span residues 1–87 (MDSD…YSGP), 223–259 (ENKD…TDKA), and 629–715 (EPKH…DDIP). Basic and acidic residues-rich tracts occupy residues 7–25 (GDRR…DSYR), 37–57 (YDNK…SRGD), and 223–242 (ENKD…VKEE). Acidic residues predominate over residues 243 to 256 (PNEEQEEGAIDDET). Residues 629–659 (EPKHMPHMSRDDHRGGGGDRGYGRERDDDRG) show a composition bias toward basic and acidic residues.

It belongs to the ARS2 family.

The protein resides in the nucleus. Functionally, acts as a mediator between the cap-binding complex (CBC) and the primary microRNAs (miRNAs) processing machinery. Contributes to the stability and delivery of capped primary miRNA transcripts to the primary miRNA processing complex, thereby playing a role in RNA-mediated gene silencing (RNAi) by miRNAs. In Caenorhabditis briggsae, this protein is Serrate RNA effector molecule homolog.